Consider the following 347-residue polypeptide: Haptoglobin (347 aa).

The first 18 residues, M1 to A18, serve as a signal peptide directing secretion. The 58-residue stretch at D31–A88 folds into the Sushi domain. 4 disulfide bridges follow: C52/C86, C90/C207, C250/C281, and C292/C322. The Peptidase S1 domain occupies I103–A345. Residues N148, N182, N256, and N264 are each glycosylated (N-linked (GlcNAc...) asparagine). Positions V259–N264 are interaction with CD163.

Belongs to the peptidase S1 family. As to quaternary structure, tetramer of two alpha and two beta chains; disulfide-linked. The hemoglobin/haptoglobin complex is composed of a haptoglobin dimer bound to two hemoglobin alpha-beta dimers. Interacts with CD163. Interacts with ERGIC3. Expressed by the liver and secreted in plasma.

It is found in the secreted. Functionally, as a result of hemolysis, hemoglobin is found to accumulate in the kidney and is secreted in the urine. Haptoglobin captures, and combines with free plasma hemoglobin to allow hepatic recycling of heme iron and to prevent kidney damage. Haptoglobin also acts as an antioxidant, has antibacterial activity and plays a role in modulating many aspects of the acute phase response. Hemoglobin/haptoglobin complexes are rapidly cleared by the macrophage CD163 scavenger receptor expressed on the surface of liver Kupfer cells through an endocytic lysosomal degradation pathway. The chain is Haptoglobin (Hp) from Mus musculus (Mouse).